The following is a 182-amino-acid chain: Peptidyl-tRNA hydrolase (182 aa).

TRNA is bound at residue Tyr14. Residue His19 is the Proton acceptor of the active site. Residues Phe64, Asn66, and Asn112 each coordinate tRNA.

This sequence belongs to the PTH family. In terms of assembly, monomer.

Its subcellular location is the cytoplasm. It carries out the reaction an N-acyl-L-alpha-aminoacyl-tRNA + H2O = an N-acyl-L-amino acid + a tRNA + H(+). Its function is as follows. Hydrolyzes ribosome-free peptidyl-tRNAs (with 1 or more amino acids incorporated), which drop off the ribosome during protein synthesis, or as a result of ribosome stalling. In terms of biological role, catalyzes the release of premature peptidyl moieties from peptidyl-tRNA molecules trapped in stalled 50S ribosomal subunits, and thus maintains levels of free tRNAs and 50S ribosomes. This chain is Peptidyl-tRNA hydrolase, found in Wolbachia pipientis wMel.